An 87-amino-acid chain; its full sequence is X protein (87 aa).

The segment at Leu-5–Leu-16 is nuclear export signal. Residues Gly-18–Glu-87 form a disordered region. The span at Asp-36–Thr-48 shows a compositional bias: low complexity.

In terms of assembly, interacts with P and N proteins. These interactions presumably promote nuclear targeting of the X protein in infected cells. Interacts with host MAVS; this interaction inhibits MAVS-induced apoptosis. Phosphorylated.

It localises to the host nucleus. The protein localises to the host mitochondrion. In terms of biological role, plays an essential role in the inhibition of host apoptosis. Mediates host mitochondria-mediated apoptosis through interaction with the mitochondrial antiviral signaling protein/MAVS and thereby promotes viral persistence in host central nervous system. Within the host nucleus, regulates viral RNA synthesis and polymerase complex assembly. In Borna disease virus 1 (BoDV-1), this protein is X protein (P/X).